The following is a 442-amino-acid chain: GDP-L-galactose phosphorylase 1 (442 aa).

His238 functions as the Tele-GMP-histidine intermediate in the catalytic mechanism.

Belongs to the GDPGP1 family. In terms of assembly, interacts with TLP1. In terms of tissue distribution, expressed in leaves, stems, roots, flowers and siliques. Highest expression in green tissues.

It localises to the cytoplasm. Its subcellular location is the nucleus. The catalysed reaction is GDP-beta-L-galactose + phosphate = beta-L-galactose 1-phosphate + GDP + H(+). It participates in cofactor biosynthesis; L-ascorbate biosynthesis via GDP-alpha-D-mannose pathway; L-ascorbate from GDP-alpha-D-mannose: step 2/5. With respect to regulation, not inhibited by dithiothreitol, N-ethylmaleimide, phenylmethane sulfonyl fluoride, ascorbate, L-galactose and L-galactonolactone. In terms of biological role, catalyzes a reaction of the Smirnoff-Wheeler pathway, the major route to ascorbate biosynthesis in plants. Acts as a phosphorylase rather than as a transferase. Uses preferentially GDP-L-galactose and GDP-D-glucose as substrates. Lower activity with GDP-L-fucose, very low activity with GDP-D-mannose, and no activity with UDP-D-glucose, UDP-D-galactose or ADP-D-glucose. Highly specific for inorganic phosphate as the guanylyl acceptor. This Arabidopsis thaliana (Mouse-ear cress) protein is GDP-L-galactose phosphorylase 1 (VTC2).